A 771-amino-acid chain; its full sequence is DNA helicase/primase complex-associated protein (771 aa).

It belongs to the herpesviridae HEPA family. Associates with the primase and the helicase to form the helicase-primase complex. Interacts with the origin-binding protein. Interacts with the polymerase catalytic subunit.

It is found in the host nucleus. In terms of biological role, component of the helicase/primase complex. Unwinds the DNA at the replication forks and generates single-stranded DNA for both leading and lagging strand synthesis. The primase synthesizes short RNA primers on the lagging strand that the polymerase presumably elongates using dNTPs. The primase-associated factor has no known catalytic activity in the complex and may serve to facilitate the formation of the replisome by directly interacting with the origin-binding protein and the polymerase. This is DNA helicase/primase complex-associated protein from Varicella-zoster virus (strain Oka vaccine) (HHV-3).